The chain runs to 223 residues: Uracil-DNA glycosylase (223 aa).

Asp-67 serves as the catalytic Proton acceptor.

Belongs to the uracil-DNA glycosylase (UDG) superfamily. UNG family.

It localises to the cytoplasm. The enzyme catalyses Hydrolyzes single-stranded DNA or mismatched double-stranded DNA and polynucleotides, releasing free uracil.. Its function is as follows. Excises uracil residues from the DNA which can arise as a result of misincorporation of dUMP residues by DNA polymerase or due to deamination of cytosine. This Borrelia duttonii (strain Ly) protein is Uracil-DNA glycosylase.